A 3027-amino-acid polypeptide reads, in one-letter code: DmX-like protein 1 (3027 aa).

3 WD repeats span residues 108-145, 166-206, and 229-277; these read FLES…KPTE, KTAS…RTAV, and AHPR…NDCL. A phosphoserine mark is found at Ser324, Ser422, Ser425, and Ser436. Positions 420-433 are enriched in polar residues; it reads PSSEASVEDSNQAD. The disordered stretch occupies residues 420–450; the sequence is PSSEASVEDSNQADVKSDEETDDGVDDLKIN. The stretch at 476–516 is one WD 4 repeat; sequence DHQIEVLLSEWSKNADMLFSIHPMDGSLLVWHVDWLDEYQP. Residues 563 to 584 are disordered; that stretch reads KQKPSGLTRSTSMLISSGHNKS. Phosphoserine is present on Ser574. 3 WD repeats span residues 580–621, 628–665, and 848–895; these read GHNK…ESAF, SHKS…RTPD, and GKDS…IPVS. Ser918 and Ser924 each carry phosphoserine. WD repeat units lie at residues 968-1010, 1134-1175, and 1211-1251; these read PSAG…GESA, SNTK…VQDQ, and GSPP…EPVI. A phosphoserine mark is found at Ser1830, Ser1896, Ser1908, and Ser1970. Disordered regions lie at residues 2367–2412 and 2446–2468; these read PSKE…SSAP and SRAE…DDDD. Over residues 2451-2468 the composition is skewed to acidic residues; that stretch reads DSEESLGSDDDDNDDDDD. 6 WD repeats span residues 2742 to 2783, 2785 to 2824, 2836 to 2878, 2884 to 2923, 2926 to 2965, and 2978 to 3016; these read KAIN…TCFR, GGNS…CPVT, CHNK…ANSL, CHDS…QRQL, SHDS…LLHT, and NIGT…SPLN.

As to expression, expressed in bone, breast, eye, foreskin, heart, parathyroid, small intestine, testis, tonsils, placenta and uterus.

The sequence is that of DmX-like protein 1 (DMXL1) from Homo sapiens (Human).